A 447-amino-acid polypeptide reads, in one-letter code: UDP-N-acetyl-alpha-D-muramoyl-L-alanyl-L-glutamate epimerase (447 aa).

It belongs to the MurL family.

The enzyme catalyses UDP-N-acetyl-alpha-D-muramoyl-L-alanyl-L-glutamate + ATP + H2O = UDP-N-acetyl-alpha-D-muramoyl-L-alanyl-D-glutamate + AMP + diphosphate + H(+). The protein operates within cell wall biogenesis; peptidoglycan biosynthesis. Its function is as follows. Cell wall formation. Catalyzes epimerization of the terminal L-glutamate in UDP-N-acetyl-alpha-D-muramoyl-L-alanyl-L-glutamate. This Micromonospora sp. (strain ATCC 39149 / NRRL 15099 / SCC 1413) protein is UDP-N-acetyl-alpha-D-muramoyl-L-alanyl-L-glutamate epimerase.